Consider the following 65-residue polypeptide: Hirudin-3B' (65 aa).

The interval 1-3 (VVY) is interaction with thrombin active site. 3 cysteine pairs are disulfide-bonded: Cys6-Cys14, Cys16-Cys28, and Cys22-Cys39. Residues 40-65 (VTGEGTPKPQSHNDGDFEEIPEEYLQ) are disordered. Thr45 carries O-linked (GalNAc...) threonine glycosylation. Residues 55 to 65 (DFEEIPEEYLQ) are interaction with fibrinogen-binding exosite of thrombin. Acidic residues predominate over residues 55 to 65 (DFEEIPEEYLQ). Position 63 is a sulfotyrosine (Tyr63).

This sequence belongs to the protease inhibitor I14 (hirudin) family.

Its subcellular location is the secreted. Functionally, hirudin is a potent thrombin-specific protease inhibitor. It forms a stable non-covalent complex with alpha-thrombin, thereby abolishing its ability to cleave fibrinogen. The chain is Hirudin-3B' from Hirudo medicinalis (Medicinal leech).